We begin with the raw amino-acid sequence, 198 residues long: CASP-like protein 4B3 (198 aa).

A disordered region spans residues 1-27 (MSSSGPPAGDGRDDASGPGPAGAAAAA). Residues 1-51 (MSSSGPPAGDGRDDASGPGPAGAAAAADGSVPVSRSIVERWKMEPAAARAR) are Cytoplasmic-facing. The span at 16-27 (SGPGPAGAAAAA) shows a compositional bias: low complexity. Residues 52 to 72 (LLLRAVAWLFSLLALVVMASN) traverse the membrane as a helical segment. The Extracellular portion of the chain corresponds to 73 to 85 (KHGHGGAQDFDNY). Residues 86–106 (PEYTYCLGISIIAVLYTTAQV) traverse the membrane as a helical segment. Over 107–124 (TRDVHRLSWGRDVIAGRK) the chain is Cytoplasmic. The helical transmembrane segment at 125–145 (AAAVVDFAGDQVVAYLLMSAL) threads the bilayer. Residues 146-166 (SAAAPVTDYMRQAADNLFTDS) lie on the Extracellular side of the membrane. Residues 167 to 187 (AAAAISMAFLAFLAAGLSALV) form a helical membrane-spanning segment. Residues 188-198 (SGYNLAMEVLV) lie on the Cytoplasmic side of the membrane.

The protein belongs to the Casparian strip membrane proteins (CASP) family. Homodimer and heterodimers.

The protein resides in the cell membrane. The sequence is that of CASP-like protein 4B3 from Oryza sativa subsp. japonica (Rice).